Here is a 336-residue protein sequence, read N- to C-terminus: Holliday junction branch migration complex subunit RuvB (336 aa).

A large ATPase domain (RuvB-L) region spans residues 4–184; it reads SDRLISSQSI…FGIVQRLEYY (181 aa). ATP is bound by residues Ile23, Arg24, Gly65, Lys68, Thr69, Thr70, 131 to 133, Arg174, Tyr184, and Arg221; that span reads EDY. Thr69 provides a ligand contact to Mg(2+). Positions 185 to 255 are small ATPAse domain (RuvB-S); it reads SVDSLTQIVA…MAQQALEMLE (71 aa). A head domain (RuvB-H) region spans residues 258–336; that stretch reads QHGFDLMDRK…HFGFSAIEQE (79 aa). Positions 313 and 318 each coordinate DNA.

This sequence belongs to the RuvB family. In terms of assembly, homohexamer. Forms an RuvA(8)-RuvB(12)-Holliday junction (HJ) complex. HJ DNA is sandwiched between 2 RuvA tetramers; dsDNA enters through RuvA and exits via RuvB. An RuvB hexamer assembles on each DNA strand where it exits the tetramer. Each RuvB hexamer is contacted by two RuvA subunits (via domain III) on 2 adjacent RuvB subunits; this complex drives branch migration. In the full resolvosome a probable DNA-RuvA(4)-RuvB(12)-RuvC(2) complex forms which resolves the HJ.

Its subcellular location is the cytoplasm. The catalysed reaction is ATP + H2O = ADP + phosphate + H(+). The RuvA-RuvB-RuvC complex processes Holliday junction (HJ) DNA during genetic recombination and DNA repair, while the RuvA-RuvB complex plays an important role in the rescue of blocked DNA replication forks via replication fork reversal (RFR). RuvA specifically binds to HJ cruciform DNA, conferring on it an open structure. The RuvB hexamer acts as an ATP-dependent pump, pulling dsDNA into and through the RuvAB complex. RuvB forms 2 homohexamers on either side of HJ DNA bound by 1 or 2 RuvA tetramers; 4 subunits per hexamer contact DNA at a time. Coordinated motions by a converter formed by DNA-disengaged RuvB subunits stimulates ATP hydrolysis and nucleotide exchange. Immobilization of the converter enables RuvB to convert the ATP-contained energy into a lever motion, pulling 2 nucleotides of DNA out of the RuvA tetramer per ATP hydrolyzed, thus driving DNA branch migration. The RuvB motors rotate together with the DNA substrate, which together with the progressing nucleotide cycle form the mechanistic basis for DNA recombination by continuous HJ branch migration. Branch migration allows RuvC to scan DNA until it finds its consensus sequence, where it cleaves and resolves cruciform DNA. The polypeptide is Holliday junction branch migration complex subunit RuvB (Legionella pneumophila (strain Lens)).